The primary structure comprises 862 residues: MFLNALKAVFGTKNDREVKKYFKRVAQINALEGNYQNLSDDELKAEFAKFKEQILSGEKNENDVLNDVFAIVRETGKRTLNMRHFDVQLIGGMVLHDGKIAEMKTGEGKTLVATLPVVLNAMSGKGVHVVTVNDYLAKRDAEQMSAIYNFLGFSVGVVLSSQNSDIEHKQAYDCDITYGTNNEFGFDYLRDNMKFSKAEKVQREHNFVIVDEVDSILIDEARTPLIISGPTNRTLDGYIKANEVAKQMQKGEAVLPPAKPEGDFVVDEKNRNILITEAGIAKAEKLFGVENLYSLDNAILAHQLDQALKAHNLFEKDVHYVLRNNEVIIVDEFTGRLSEGRRFSEGLHQALEAKENVKIQEESQTLADITFQNYFRMYNKLAGMTGTAQTEATEFSQIYSLDVISIPTNIPIKRQDKDDLIYKTQNEKFKAVIEEIKKANAKGQPVLVGTASIERSEVFHNMLVKEKIPHHVLNAKNHEQEALIIQDAGKKGAVTIATNMAGRGVDIKIDDEIRALGGLYIIGTERHESRRIDNQLRGRAGRQGDPGISRFYLSLEDNLLRIFGGDRIKSIMDRLGIEEGESIESRIVTRAVENAQKKVESLHFESRKHLLEYDDVANEQRKTIYRYRNELLDENYDIRAKISQNIAEYSANVMNDYMLDESGSNVNFENLKAKILYECSTQISEKDFENLSVIEMQDKLSQILENSYNEKMLRLEIKELRNIERILYLQVLDNAWREHLYQMDILKTGIGLRGYNQKDPLVEYKKESYNLFLELVNRIKFDSIKLLFSVQFNQEEAQNLENKANEENEKLLQSSVEMGASEDNLGEAEFKKVPRNAPCPCGSGKKFKECHGKSGPKQGILA.

ATP is bound by residues Q88, 106-110 (GEGKT), and D506. Zn(2+) contacts are provided by C839, C841, C850, and H851.

This sequence belongs to the SecA family. In terms of assembly, monomer and homodimer. Part of the essential Sec protein translocation apparatus which comprises SecA, SecYEG and auxiliary proteins SecDF-YajC and YidC. Zn(2+) serves as cofactor.

It is found in the cell inner membrane. The protein localises to the cytoplasm. The enzyme catalyses ATP + H2O + cellular proteinSide 1 = ADP + phosphate + cellular proteinSide 2.. Functionally, part of the Sec protein translocase complex. Interacts with the SecYEG preprotein conducting channel. Has a central role in coupling the hydrolysis of ATP to the transfer of proteins into and across the cell membrane, serving as an ATP-driven molecular motor driving the stepwise translocation of polypeptide chains across the membrane. This is Protein translocase subunit SecA from Campylobacter jejuni subsp. jejuni serotype O:2 (strain ATCC 700819 / NCTC 11168).